We begin with the raw amino-acid sequence, 1996 residues long: MDVAAQHVFLFGDQADAPMPMVRRVVERSRHSKNLESFLQSAIDNVQLEVARLTPAERDTIGPFHSLEGLADSLKEKSDRHGIAQMVSVFIARIGELILHAENDPALLDSSTPLLSLGICGGLLPAAAVAAATNIHELIEVASYLARVNCRVAVAISRRSIEIESGPGSWAFSVLGSAVAQLPDILEDFHREQSIPRHRRAWIAVSTPTWATVFGPPSVLSKLRETSITLKKSDAAELPAFGAVHAAHLVAPNFGDLVGESPLLNRPLKTGYKLLSGSKYAPYNATTLKDLLPQIMLDIFQNETNPARVFDVGGSYLRKGGPISLYMLGATSYLVLLRRSLHTQKFEVNLKTNPPSLQNSELRGGSGSVAVIGMSGQFPGAASVDELWDVLMRREERHRKIPIERFNADDYLDETGRGSSAITTAYGCFLENPGLFDHKMFNVSPREAMQMDPGQRLLLHGVYTALEDAGLVTGSSTAADNKRISTYIGDGSDDWRDLQSQHGVDKYIVQGTQRSFTPGRINHHFKWEGATWLVDAACGSTASAVGLAYRALINRDCDTAVAGGANIIATPFWHSALSKGGFLSKTGGCKTFRADADGYCRGEAVGVVVLKRLEDALQDNDNIVSVIRGYSRNHSADTVSITRPHVPAQMRAYQAVLHNSGLEPEDISYVEMHGTGTTAGDSAELESIVNVLAQKNTRETPLVVGAIKANLGHSEAASGISSLIKASLTFRKGMVPPQVGIPEKMGSFACLDHGTVHVPGAPVSFTRESVGKTRAMVMNNFDAAGGNSCFVLEEPPTPSLKSADPRPYHVVTVSAHCQTSLEENKRQLLQFLTENKETSLADLSYTTTARRMHHTLRSAYTGGSIQDIINSLGRDLGKNHGQDKPGAPRVAFAFTGQGAHYAGMGADLFKVSQPFRTTITGLQKICVTHGFPQFAHLISDPSTPMENVSTAQIHLSLAALEIALVDLWKILGISPDLVIGHSIGEYAALYAAGVLSATDAMYLVGTRAMLLQDSLEEGVNGMLSISGTPQDVAAIVSDESVMADCEVACHNSPGMVVLGGRRPRLAELEELLRARKFKCKLLDVPYAMHSSQLDTILPGFRKAARGVCFGTPTIKVISTLTGTEQQHFDSEYLVRQTRESVKYTQAISHCLSQGLVDSATLWLEIGPGPVCLGLIRSNTNVATNLAMPSLKKDDQNWKSISSALASLYVAGKAIGWREYHSDFIDSLSLISLPSYAFDNRNFWMPYTTGGKHQDVQPISTCLHHLVSQDDNGKEQSATFTAVVSQPSLLKMIQGHKLSGITVCPAGVFAEMALTAARYVLTGGSFSAPVPSLSVIDIQIDHPITPQSGSQQVIQVNVRRPKQSRDFAVSIVDQAKPSLITAKCCIRQTDEQDVIATRRQQLDMIRPKISKLMQDAASGIANRFQGKLFYKLFANLMDYGGQYEGVKEAIVGDDFTEALATIRLPKAQDSNESCTLSPYWIDALTHLVGFLLNGNPMNSGDDVYIGTQMERMEILAKDFSPDVVYQSYAYLEPSQDSVNYRGHVYILSGDSIVGFLEGARFRKMPRTTLHRILGKAVPPKPAKETSHPSVEATAPATTNGRSSATNAQAEAPAPPVNGSNGHRKTVESVLIACLIEETGMEESEILPSTFFAEIGVDSLMSISILSEIKNETGVELNASFLMEYPTLGDAQRQLRTLERKREGANPSTNGTDVAVVVNGEKPAKPKRECNVVLMQGQAPEDSSSIPLFLLADGAGSAAAYIHLPKLGLEDDLAVYAVESPWVRDPAEFTCSFEEAAALYLAAVRAKQPRGPYLLGGWSGGGVFSYEVARRLLAAGERVLGLVVIDIRAPSLRPNPHAAAPTMDIIDQIGMLSGIERTFADDASPEAARLKRHMLSTVTCFSRLVPTPMPPHLRPERTFVVWAKKDVLPKAAYDQLPPGLDAWFYPASHDMGPNGWDELVGDAVEYSQVEGDHFSIMTFPEVTELGRVLQAAVAKCRV.

The tract at residues 9-245 is N-terminal acylcarrier protein transacylase (SAT) domain; sequence FLFGDQADAP…AELPAFGAVH (237 aa). In terms of domain architecture, Ketosynthase family 3 (KS3) spans 366–794; it reads SGSVAVIGMS…GGNSCFVLEE (429 aa). Residues C538, H673, and H713 each act as for beta-ketoacyl synthase activity in the active site. The interval 891–1150 is malonyl-CoA:ACP transacylase (MAT) domain; the sequence is AFAFTGQGAH…VKYTQAISHC (260 aa). Residue S982 is the For acyl/malonyl transferase activity of the active site. The N-terminal hotdog fold stretch occupies residues 1263 to 1392; it reads HHLVSQDDNG…CCIRQTDEQD (130 aa). A PKS/mFAS DH domain is found at 1263–1569; the sequence is HHLVSQDDNG…FRKMPRTTLH (307 aa). Positions 1267–1568 are product template (PT) domain; the sequence is SQDDNGKEQS…RFRKMPRTTL (302 aa). Catalysis depends on H1295, which acts as the Proton acceptor; for dehydratase activity. The segment at 1416–1569 is C-terminal hotdog fold; sequence ASGIANRFQG…FRKMPRTTLH (154 aa). The active-site Proton donor; for dehydratase activity is D1481. A disordered region spans residues 1573–1621; it reads GKAVPPKPAKETSHPSVEATAPATTNGRSSATNAQAEAPAPPVNGSNGH. Polar residues predominate over residues 1594–1607; the sequence is PATTNGRSSATNAQ. Positions 1620–1697 constitute a Carrier domain; it reads GHRKTVESVL…DAQRQLRTLE (78 aa). S1657 is subject to O-(pantetheine 4'-phosphoryl)serine. Residues 1725-1923 form a thioesterase (TE) domain region; that stretch reads KRECNVVLMQ…ERTFVVWAKK (199 aa).

It functions in the pathway secondary metabolite biosynthesis; terpenoid biosynthesis. In terms of biological role, non-reducing polyketide synthase; part of the gene cluster that mediates the biosynthesis of the meroterpenoids arthripenoids. The pathway begins with the HR-PKS atnH that catalyzes two chain-extension steps to form a reduced triketide, which then primes the SAT domain in the NR-PKS atnG to initiate three more cycles of extension to give a linear hexaketide corresponding to the polyketide part of arthripenoids. The FAD-dependent monooxygenase atnJ then performs an oxidative decarboxylation at C11 of the atnH/atnG product, via an electrophilic aromatic hydroxylation with concomitant ipso-decarboxylation. The membrane-bound polyprenyl transferase atnF then introduces a farnesyl group before the FAD-dependent monooxygenase atnK functions as the first epoxidase on terminal C12'-C13' olefin, followed by a second epoxidation on C7'-C8' catalyzed by atnA. The terpene cyclase/mutase atnI then initiates the sequential tricyclic ring formation through protonation of the terminal epoxide and catalyzes the regioselective and stereoselective 6/6/6-tricyclic ring formation. The cytochrome P450 monooxygenase atnM is responsible for hydroxylating both C1' and C10'. The next steps may involve ketoreduction and acetyl transfer by the ketoreductase atnB and the acetyltransferase atnC, and lead to the production of arthripenoid B, the final biosynthetic product of the atn cluster. The hydroquinone moiety in arthripenoid B is prone to undergo spontaneous oxidation to afford a benzoquinone compound, a key intermediate for generating structure diversity. For instance, addition of a cysteine followed by ring contraction gives arthripenoid A, tautomerization gives the main product arthripenoid C, addition of a molecular of water or amine affords arthripenoid D or E, respectively, and loss of one water forms arthripenoid F. The polypeptide is Non-reducing polyketide synthase atnG (Arthrinium sp).